The chain runs to 351 residues: Actin maturation protease (351 aa).

Positions 1–19 are enriched in pro residues; sequence MTSPCSPPLKPPISPPKTP. The disordered stretch occupies residues 1–70; that stretch reads MTSPCSPPLK…PPAATGPAPR (70 aa). Positions 36–50 are enriched in low complexity; sequence LDFSALPSPPWSQQT. A compositionally biased stretch (pro residues) spans 51 to 64; that stretch reads PVPPPLPLPPPPAA. Positions 124–244 are peptidase C39-like; that stretch reads SLIQEGPQCG…WAVSAGVLLG (121 aa). Residue cysteine 132 is part of the active site. Serine 316 carries the post-translational modification Phosphoserine.

This sequence belongs to the ACTMAP family. In terms of assembly, interacts (via N-terminus) with PFN2 isoforms IIa and IIb; the interactions may facilitate efficient cleavage of the acetylated N-terminus of immature actin. Interacts with PFN1.

The protein localises to the cytoplasm. It carries out the reaction N-terminal N(alpha)-acetyl-L-methionyl-L-aspartyl-[protein] + H2O = N-terminal L-aspartyl-[protein] + N-acetyl-L-methionine. The catalysed reaction is N-terminal N(alpha)-acetyl-L-methionyl-L-glutamyl-[protein] + H2O = N-terminal L-glutamyl-[protein] + N-acetyl-L-methionine. The enzyme catalyses N-terminal N(alpha)-acetyl-L-cysteinyl-L-aspartyl-[protein] + H2O = N-terminal L-aspartyl-[protein] + N-acetyl-L-cysteine. It catalyses the reaction N-terminal N(alpha)-acetyl-L-cysteinyl-L-glutamyl-[protein] + H2O = N-terminal L-glutamyl-[protein] + N-acetyl-L-cysteine. Functionally, actin maturation protease that specifically mediates the cleavage of immature acetylated N-terminal actin, thereby contributing to actin maturation. Cleaves N-terminal acetylated methionine of immature cytoplasmic beta- and gamma-actins ACTB and ACTG1 after translation. Cleaves N-terminal acetylated cysteine of muscle alpha-actins ACTA1, ACTC1 and ACTA2 after canonical removal of N-terminal methionine. The protein is Actin maturation protease of Homo sapiens (Human).